Here is a 385-residue protein sequence, read N- to C-terminus: 3-hydroxyisobutyryl-CoA hydrolase, mitochondrial (385 aa).

The transit peptide at 1 to 32 (MGQPYAWRLLSRVSSFRRASVILQHLRMSMHT) directs the protein to the mitochondrion. Lys-54, Lys-91, and Lys-100 each carry N6-acetyllysine; alternate. N6-succinyllysine; alternate occurs at positions 54, 91, and 100. Glu-120, Gly-145, Glu-168, and Asp-176 together coordinate substrate. Lys-220 is modified (N6-acetyllysine; alternate). Residue Lys-220 is modified to N6-succinyllysine; alternate. Ser-233 carries the post-translational modification Phosphoserine. 2 positions are modified to N6-succinyllysine: Lys-249 and Lys-256. Position 296 is an N6-acetyllysine; alternate (Lys-296). Lys-296 bears the N6-succinyllysine; alternate mark. Position 300 is an N6-succinyllysine (Lys-300). The residue at position 352 (Lys-352) is an N6-acetyllysine; alternate. At Lys-352 the chain carries N6-succinyllysine; alternate. N6-acetyllysine is present on residues Lys-359 and Lys-364. Position 376 is an N6-succinyllysine (Lys-376).

This sequence belongs to the enoyl-CoA hydratase/isomerase family.

It localises to the mitochondrion. It carries out the reaction 3-hydroxy-2-methylpropanoyl-CoA + H2O = 3-hydroxy-2-methylpropanoate + CoA + H(+). It participates in amino-acid degradation; L-valine degradation. In terms of biological role, hydrolyzes 3-hydroxyisobutyryl-CoA (HIBYL-CoA), a saline catabolite. Has high activity toward isobutyryl-CoA. Could be an isobutyryl-CoA dehydrogenase that functions in valine catabolism. Also hydrolyzes 3-hydroxypropanoyl-CoA. In Mus musculus (Mouse), this protein is 3-hydroxyisobutyryl-CoA hydrolase, mitochondrial (Hibch).